Here is an 89-residue protein sequence, read N- to C-terminus: Small ribosomal subunit protein uS15 (89 aa).

Belongs to the universal ribosomal protein uS15 family. As to quaternary structure, part of the 30S ribosomal subunit. Forms a bridge to the 50S subunit in the 70S ribosome, contacting the 23S rRNA.

One of the primary rRNA binding proteins, it binds directly to 16S rRNA where it helps nucleate assembly of the platform of the 30S subunit by binding and bridging several RNA helices of the 16S rRNA. Functionally, forms an intersubunit bridge (bridge B4) with the 23S rRNA of the 50S subunit in the ribosome. This is Small ribosomal subunit protein uS15 from Brucella abortus (strain S19).